Reading from the N-terminus, the 299-residue chain is Probable arylamine N-acetyltransferase 2 (299 aa).

The active-site Acyl-thioester intermediate is the C75. Residues H115 and D130 contribute to the active site.

Belongs to the arylamine N-acetyltransferase family.

It catalyses the reaction an arylamine + acetyl-CoA = an N-acetylarylamine + CoA. The chain is Probable arylamine N-acetyltransferase 2 from Dictyostelium discoideum (Social amoeba).